A 153-amino-acid chain; its full sequence is Cytochrome c-type biogenesis protein CcmE (153 aa).

The Cytoplasmic portion of the chain corresponds to 1–8; the sequence is MATRRGRR. The chain crosses the membrane as a helical; Signal-anchor for type II membrane protein span at residues 9 to 29; that stretch reads ALLIAGGVGLLALAAALVLNA. The Periplasmic portion of the chain corresponds to 30 to 153; it reads LRSNLVFFFS…PSATLQTEAR (124 aa). The heme site is built by H124 and Y128.

Belongs to the CcmE/CycJ family.

The protein resides in the cell inner membrane. Heme chaperone required for the biogenesis of c-type cytochromes. Transiently binds heme delivered by CcmC and transfers the heme to apo-cytochromes in a process facilitated by CcmF and CcmH. This Bordetella bronchiseptica (strain ATCC BAA-588 / NCTC 13252 / RB50) (Alcaligenes bronchisepticus) protein is Cytochrome c-type biogenesis protein CcmE.